Here is a 167-residue protein sequence, read N- to C-terminus: Peptidoglycan L-alanyl-D-glutamate endopeptidase CwlK (167 aa).

Positions 1–26 are cleaved as a signal peptide; that stretch reads MNLPAKTFVILCILFLLDLCFSYIRH.

It belongs to the peptidase M15C family.

It localises to the cell membrane. Its function is as follows. Cleaves the linkage of the L-alanine-D-glutamic acid of B.subtilis cell wall. This chain is Peptidoglycan L-alanyl-D-glutamate endopeptidase CwlK (cwlK), found in Bacillus subtilis (strain 168).